The primary structure comprises 556 residues: Phenylalanine--tRNA ligase beta subunit (556 aa).

Positions 269–345 (MEPEEVVYDV…MGYGYERIEP (77 aa)) constitute a B5 domain. The Mg(2+) site is built by D323, D329, E332, and E333.

The protein belongs to the phenylalanyl-tRNA synthetase beta subunit family. Type 2 subfamily. In terms of assembly, tetramer of two alpha and two beta subunits. It depends on Mg(2+) as a cofactor.

The protein resides in the cytoplasm. The enzyme catalyses tRNA(Phe) + L-phenylalanine + ATP = L-phenylalanyl-tRNA(Phe) + AMP + diphosphate + H(+). The protein is Phenylalanine--tRNA ligase beta subunit of Thermofilum pendens (strain DSM 2475 / Hrk 5).